Consider the following 477-residue polypeptide: MSDDRFAEDEIIQQRRKRRLEILKKYQQTGNGHSDLSIPEKKLKEDVDQVSTTKPIEAVPKMKTNASKIEINKEGSNSNTKLDVTNSTTSDSPSIKSSVQIEDTEDDMFADSPSPSVKRQNTGKGISTLTRSFADMQDNWDDIEGYYKVVLMEELDSRYIVQSNLGKGMFSTVVSALDRNRNQTFAIKIIRNNEVMYKEGLKEVSILERLQAADREGKQHIIHYERHFMHKNHLCMVFEMLSLNLRDILKKFGRNVGLSIKAVRLYAYQMFMALDLLKQCNVIHSDIKPDNMLVNEKRNILKICDLGSASDASENEITPYLVSRFYRAPEIILGFPYSCPIDTWSVGCSLYELYTGQILFPGRTNNQMLRYMMECKGKFSHKMLKRSQFLNDHFDADFNFIQIDHDPITNQETRKPVKFSKPTKDIRSRLKEVPTSTDEEFIIRQELMDLLEKCLELNPEKRVPPEVALKHPFFIKK.

The interval 25 to 123 (KYQQTGNGHS…SPSVKRQNTG (99 aa)) is disordered. A compositionally biased stretch (basic and acidic residues) spans 38-47 (IPEKKLKEDV). Positions 74 to 86 (EGSNSNTKLDVTN) are enriched in polar residues. Low complexity predominate over residues 87 to 98 (STTSDSPSIKSS). Residue serine 92 is modified to Phosphoserine. A compositionally biased stretch (polar residues) spans 113–123 (PSPSVKRQNTG). In terms of domain architecture, Protein kinase spans 159 to 477 (YIVQSNLGKG…ALKHPFFIKK (319 aa)). ATP is bound by residues 165 to 173 (LGKGMFSTV) and lysine 188. Aspartate 286 acts as the Proton acceptor in catalysis. At tyrosine 320 the chain carries Phosphotyrosine.

Belongs to the protein kinase superfamily. CMGC Ser/Thr protein kinase family.

The catalysed reaction is L-seryl-[protein] + ATP = O-phospho-L-seryl-[protein] + ADP + H(+). It carries out the reaction L-threonyl-[protein] + ATP = O-phospho-L-threonyl-[protein] + ADP + H(+). Functionally, has a role in pre-mRNA splicing and is essential for growth. Phosphorylates srp1. The polypeptide is Serine/threonine-protein kinase prp4 (prp4) (Schizosaccharomyces pombe (strain 972 / ATCC 24843) (Fission yeast)).